A 293-amino-acid polypeptide reads, in one-letter code: uncharacterized protein (293 aa).

This sequence belongs to the TolB family.

This is an uncharacterized protein from Agrobacterium fabrum (strain C58 / ATCC 33970) (Agrobacterium tumefaciens (strain C58)).